Here is a 797-residue protein sequence, read N- to C-terminus: uncharacterized protein (797 aa).

This is an uncharacterized protein from Treponema pallidum (strain Nichols).